Here is a 268-residue protein sequence, read N- to C-terminus: Shikimate dehydrogenase (NADP(+)) (268 aa).

Thr62 is a binding site for shikimate. Lys66 (proton acceptor) is an active-site residue. Glu78 lines the NADP(+) pocket. Asn87 and Asp102 together coordinate shikimate. Residues 126–130 (GSGGI) and Leu207 contribute to the NADP(+) site. Tyr209 is a shikimate binding site. Residue Gly230 participates in NADP(+) binding.

The protein belongs to the shikimate dehydrogenase family. As to quaternary structure, homodimer.

The enzyme catalyses shikimate + NADP(+) = 3-dehydroshikimate + NADPH + H(+). It functions in the pathway metabolic intermediate biosynthesis; chorismate biosynthesis; chorismate from D-erythrose 4-phosphate and phosphoenolpyruvate: step 4/7. Its function is as follows. Involved in the biosynthesis of the chorismate, which leads to the biosynthesis of aromatic amino acids. Catalyzes the reversible NADPH linked reduction of 3-dehydroshikimate (DHSA) to yield shikimate (SA). In Thermoplasma acidophilum (strain ATCC 25905 / DSM 1728 / JCM 9062 / NBRC 15155 / AMRC-C165), this protein is Shikimate dehydrogenase (NADP(+)).